Reading from the N-terminus, the 205-residue chain is Holliday junction branch migration complex subunit RuvA (205 aa).

The domain I stretch occupies residues 1–64 (MIGRLSGILV…EDAQLLYGFI (64 aa)). The segment at 65-143 (TKQERALFRL…SLLEASAGSE (79 aa)) is domain II. A flexible linker region spans residues 144-156 (REFMLQSNYTPAA). The domain III stretch occupies residues 157-205 (AVDSAEEDAISALLSLGYKPAQASKSVSAAFKEGMSSETLIKAALKSML).

Belongs to the RuvA family. Homotetramer. Forms an RuvA(8)-RuvB(12)-Holliday junction (HJ) complex. HJ DNA is sandwiched between 2 RuvA tetramers; dsDNA enters through RuvA and exits via RuvB. An RuvB hexamer assembles on each DNA strand where it exits the tetramer. Each RuvB hexamer is contacted by two RuvA subunits (via domain III) on 2 adjacent RuvB subunits; this complex drives branch migration. In the full resolvosome a probable DNA-RuvA(4)-RuvB(12)-RuvC(2) complex forms which resolves the HJ.

Its subcellular location is the cytoplasm. In terms of biological role, the RuvA-RuvB-RuvC complex processes Holliday junction (HJ) DNA during genetic recombination and DNA repair, while the RuvA-RuvB complex plays an important role in the rescue of blocked DNA replication forks via replication fork reversal (RFR). RuvA specifically binds to HJ cruciform DNA, conferring on it an open structure. The RuvB hexamer acts as an ATP-dependent pump, pulling dsDNA into and through the RuvAB complex. HJ branch migration allows RuvC to scan DNA until it finds its consensus sequence, where it cleaves and resolves the cruciform DNA. The protein is Holliday junction branch migration complex subunit RuvA of Shewanella frigidimarina (strain NCIMB 400).